The following is a 167-amino-acid chain: MNYYNVGKIIATHGLKGEVKVALTTDFPEDRFRAGSRLYLGDDSREVTVAAGRPFKQFWLVTFAEITDIDQAEKLKGTEILISEEDQGELPDGVYYYRELLGCKVLDDESGEEIGELTDIEAPGANDIWEVTDKNGKSFWLPYIPQVVKSVDIDKKEVRVELMEGLR.

The 75-residue stretch at 92-166 (DGVYYYRELL…EVRVELMEGL (75 aa)) folds into the PRC barrel domain.

It belongs to the RimM family. As to quaternary structure, binds ribosomal protein uS19.

The protein resides in the cytoplasm. In terms of biological role, an accessory protein needed during the final step in the assembly of 30S ribosomal subunit, possibly for assembly of the head region. Essential for efficient processing of 16S rRNA. May be needed both before and after RbfA during the maturation of 16S rRNA. It has affinity for free ribosomal 30S subunits but not for 70S ribosomes. This Lactobacillus delbrueckii subsp. bulgaricus (strain ATCC 11842 / DSM 20081 / BCRC 10696 / JCM 1002 / NBRC 13953 / NCIMB 11778 / NCTC 12712 / WDCM 00102 / Lb 14) protein is Ribosome maturation factor RimM.